The sequence spans 1778 residues: Protein TIC 214 (1778 aa).

The next 6 membrane-spanning stretches (helical) occupy residues isoleucine 18–glycine 38, phenylalanine 67–leucine 87, proline 90–asparagine 110, valine 132–leucine 152, valine 175–isoleucine 195, and isoleucine 226–isoleucine 246. Residues glycine 1498–glutamate 1520 are disordered.

Belongs to the TIC214 family. As to quaternary structure, part of the Tic complex.

It localises to the plastid. It is found in the chloroplast inner membrane. Involved in protein precursor import into chloroplasts. May be part of an intermediate translocation complex acting as a protein-conducting channel at the inner envelope. In Arabis hirsuta (Hairy rock-cress), this protein is Protein TIC 214.